A 260-amino-acid polypeptide reads, in one-letter code: Hydroxyethylthiazole kinase 1 (260 aa).

M39 is a binding site for substrate. 2 residues coordinate ATP: R115 and T160. G187 contacts substrate.

It belongs to the Thz kinase family. The cofactor is Mg(2+).

It carries out the reaction 5-(2-hydroxyethyl)-4-methylthiazole + ATP = 4-methyl-5-(2-phosphooxyethyl)-thiazole + ADP + H(+). Its pathway is cofactor biosynthesis; thiamine diphosphate biosynthesis; 4-methyl-5-(2-phosphoethyl)-thiazole from 5-(2-hydroxyethyl)-4-methylthiazole: step 1/1. Functionally, catalyzes the phosphorylation of the hydroxyl group of 4-methyl-5-beta-hydroxyethylthiazole (THZ). This chain is Hydroxyethylthiazole kinase 1, found in Streptococcus pneumoniae (strain Hungary19A-6).